The sequence spans 85 residues: uncharacterized protein (85 aa).

A coiled-coil region spans residues 17–53 (KKRYEMLVQELLKEDDEEREKILAEELELLLDFLKKA).

This is an uncharacterized protein from Archaeoglobus fulgidus (strain ATCC 49558 / DSM 4304 / JCM 9628 / NBRC 100126 / VC-16).